A 305-amino-acid polypeptide reads, in one-letter code: Probable DNA-invertase y4cG (305 aa).

The region spanning 15–148 is the Resolvase/invertase-type recombinase catalytic domain; it reads RLIGYARVST…SGMQAAKARG (134 aa). Ser-23 serves as the catalytic O-(5'-phospho-DNA)-serine intermediate.

This sequence belongs to the site-specific recombinase resolvase family.

This is Probable DNA-invertase y4cG from Sinorhizobium fredii (strain NBRC 101917 / NGR234).